The chain runs to 474 residues: Catalase (474 aa).

Residues H52 and N124 contribute to the active site. Y334 contributes to the heme binding site.

Belongs to the catalase family. It depends on heme as a cofactor.

It catalyses the reaction 2 H2O2 = O2 + 2 H2O. Functionally, decomposes hydrogen peroxide into water and oxygen; serves to protect cells from the toxic effects of hydrogen peroxide. The polypeptide is Catalase (katA) (Campylobacter jejuni subsp. jejuni serotype O:2 (strain ATCC 700819 / NCTC 11168)).